We begin with the raw amino-acid sequence, 202 residues long: CASP-like protein 2B1 (202 aa).

At 1-29 (MSYLGVGVSPGNVPVYHGSNLKVIDKRVR) the chain is on the cytoplasmic side. The chain crosses the membrane as a helical span at residues 30 to 50 (LAELVLRCLICGLGVLAAVLV). The Extracellular segment spans residues 51–72 (GTDTQVKEIFSIQKKARFTDMK). Residues 73 to 93 (ALVFLVIANGIAAAYSLLQGV) traverse the membrane as a helical segment. The Cytoplasmic segment spans residues 94–109 (RCVVGMVRGSALFSKP). Residues 110-130 (LAWAIFSGDQMMAYLTVAAVA) form a helical membrane-spanning segment. Topologically, residues 131–164 (AAAQSAVFAKLGQPELQWMKICNMYGKFCNQVGE) are extracellular. The chain crosses the membrane as a helical span at residues 165–185 (GIASALLVSVSMVVLSCISAF). The Cytoplasmic segment spans residues 186–202 (SLFRLYGANKGKDCTRW).

Belongs to the Casparian strip membrane proteins (CASP) family. As to quaternary structure, homodimer and heterodimers.

It localises to the cell membrane. The chain is CASP-like protein 2B1 from Ricinus communis (Castor bean).